Consider the following 476-residue polypeptide: Glutamyl-tRNA(Gln) amidotransferase subunit A (476 aa).

Residues lysine 76 and serine 151 each act as charge relay system in the active site. Serine 175 acts as the Acyl-ester intermediate in catalysis.

The protein belongs to the amidase family. GatA subfamily. Heterotrimer of A, B and C subunits.

The enzyme catalyses L-glutamyl-tRNA(Gln) + L-glutamine + ATP + H2O = L-glutaminyl-tRNA(Gln) + L-glutamate + ADP + phosphate + H(+). Its function is as follows. Allows the formation of correctly charged Gln-tRNA(Gln) through the transamidation of misacylated Glu-tRNA(Gln) in organisms which lack glutaminyl-tRNA synthetase. The reaction takes place in the presence of glutamine and ATP through an activated gamma-phospho-Glu-tRNA(Gln). The chain is Glutamyl-tRNA(Gln) amidotransferase subunit A from Chlorobium phaeobacteroides (strain DSM 266 / SMG 266 / 2430).